The sequence spans 192 residues: Peptidyl-tRNA hydrolase (192 aa).

Position 17 (tyrosine 17) interacts with tRNA. The active-site Proton acceptor is histidine 22. The tRNA site is built by tyrosine 68, asparagine 70, and asparagine 116.

The protein belongs to the PTH family. In terms of assembly, monomer.

It localises to the cytoplasm. The enzyme catalyses an N-acyl-L-alpha-aminoacyl-tRNA + H2O = an N-acyl-L-amino acid + a tRNA + H(+). Hydrolyzes ribosome-free peptidyl-tRNAs (with 1 or more amino acids incorporated), which drop off the ribosome during protein synthesis, or as a result of ribosome stalling. Functionally, catalyzes the release of premature peptidyl moieties from peptidyl-tRNA molecules trapped in stalled 50S ribosomal subunits, and thus maintains levels of free tRNAs and 50S ribosomes. This is Peptidyl-tRNA hydrolase from Mycolicibacterium gilvum (strain PYR-GCK) (Mycobacterium gilvum (strain PYR-GCK)).